A 616-amino-acid chain; its full sequence is Mitochondrial Rho GTPase 2 (616 aa).

Residues Met-1–Phe-590 are Cytoplasmic-facing. The 167-residue stretch at Lys-2–His-168 folds into the Miro 1 domain. Residues Gly-16, Lys-17, Thr-18, and Ser-19 each contribute to the GTP site. Thr-18 contributes to the Mg(2+) binding site. Asp-57 serves as a coordination point for Mg(2+). GTP is bound by residues Ser-59, Asn-118, Lys-119, Asp-121, Ala-149, and Lys-150. EF-hand domains follow at residues Gln-184 to Asn-219 and Phe-304 to Thr-339. Asp-199, Asn-201, Glu-208, Asp-317, Asp-319, Asp-321, and Glu-328 together coordinate Ca(2+). One can recognise a Miro 2 domain in the interval Arg-416–Phe-577. Residues Gly-428, Gly-430, Lys-431, Ser-432, and Ala-433 each coordinate GTP. Ser-432 is a Mg(2+) binding site. Glu-474 serves as a coordination point for Mg(2+). Lys-528, Asp-530, and Cys-559 together coordinate GTP. Residues Trp-591–Leu-613 traverse the membrane as a helical; Anchor for type IV membrane protein segment. At Arg-614–Lys-616 the chain is on the mitochondrial intermembrane side.

The protein belongs to the mitochondrial Rho GTPase family. As to quaternary structure, homodimer.

The protein localises to the mitochondrion outer membrane. It carries out the reaction GTP + H2O = GDP + phosphate + H(+). The catalysed reaction is ATP + H2O = ADP + phosphate + H(+). The enzyme catalyses UTP + H2O = UDP + phosphate + H(+). Functionally, atypical mitochondrial nucleoside-triphosphatase (NTPase) involved in mitochondrial trafficking. Probably involved in control of anterograde transport of mitochondria and their subcellular distribution. Can hydrolyze GTP, ATP and UTP. In Xenopus tropicalis (Western clawed frog), this protein is Mitochondrial Rho GTPase 2 (rhot2).